Consider the following 568-residue polypeptide: Clathrin coat assembly protein AP180B (568 aa).

The region spanning 1–127 (MSSLYTKLVK…EEYGRLGMDH (127 aa)) is the ENTH domain. Over residues 262-283 (HLREETKRQRGEPSEPQQDRKP) the composition is skewed to basic and acidic residues. The interval 262-302 (HLREETKRQRGEPSEPQQDRKPSTAISSTSSHNNNSNDKNK) is disordered. A Glycyl lysine isopeptide (Lys-Gly) (interchain with G-Cter in ubiquitin) cross-link involves residue Lys282. A compositionally biased stretch (low complexity) spans 284–298 (STAISSTSSHNNNSN). Thr449 is modified (phosphothreonine).

Belongs to the AP180 family. Interacts with PAN1 and the clathrin heavy and light chains CHC1 and CLC1.

Its subcellular location is the bud. It is found in the bud neck. It localises to the cell membrane. The protein resides in the cytoplasm. Involved in endocytosis and clathrin cage assembly. This chain is Clathrin coat assembly protein AP180B (YAP1802), found in Saccharomyces cerevisiae (strain ATCC 204508 / S288c) (Baker's yeast).